The following is a 319-amino-acid chain: Pectinesterase (319 aa).

A Pyrrolidone carboxylic acid modification is found at Q1. Substrate-binding residues include T83 and Q113. D136 (proton donor) is an active-site residue. An intrachain disulfide couples C150 to C170. The active-site Nucleophile is the D157. Substrate contacts are provided by R225 and W227.

Belongs to the pectinesterase family.

It is found in the secreted. Its subcellular location is the cell wall. It carries out the reaction [(1-&gt;4)-alpha-D-galacturonosyl methyl ester](n) + n H2O = [(1-&gt;4)-alpha-D-galacturonosyl](n) + n methanol + n H(+). The protein operates within glycan metabolism; pectin degradation; 2-dehydro-3-deoxy-D-gluconate from pectin: step 1/5. Its function is as follows. Catalyzes the deesterification of methyl-esterified D-galactosiduronic acid units in pectic compounds. It participates in modulating cell wall during fruit ripening, cell wall extension during pollen germination, and in defense mechanisms against pathogens. The polypeptide is Pectinesterase (Daucus carota (Wild carrot)).